Here is a 374-residue protein sequence, read N- to C-terminus: Phosphomevalonate kinase (374 aa).

This sequence belongs to the GHMP kinase family. As to quaternary structure, homodimer. Mg(2+) serves as cofactor.

It catalyses the reaction (R)-5-phosphomevalonate + ATP = (R)-5-diphosphomevalonate + ADP. The protein operates within isoprenoid biosynthesis; isopentenyl diphosphate biosynthesis via mevalonate pathway; isopentenyl diphosphate from (R)-mevalonate: step 2/3. Functionally, catalyzes the phosphorylation of (R)-mevalonate 5-phosphate (MVAP) to (R)-mevalonate 5-diphosphate (MVAPP). Functions in the mevalonate (MVA) pathway leading to isopentenyl diphosphate (IPP), a key precursor for the biosynthesis of isoprenoid compounds. This is Phosphomevalonate kinase from Streptomyces sp. (strain CL190).